The chain runs to 206 residues: Large ribosomal subunit protein uL4 (206 aa).

Residues 46 to 78 (GNRAQKDREQVKHTTKKPWRQKGTGRARAGMSS) form a disordered region. Residues 58–70 (HTTKKPWRQKGTG) are compositionally biased toward basic residues.

It belongs to the universal ribosomal protein uL4 family. Part of the 50S ribosomal subunit.

One of the primary rRNA binding proteins, this protein initially binds near the 5'-end of the 23S rRNA. It is important during the early stages of 50S assembly. It makes multiple contacts with different domains of the 23S rRNA in the assembled 50S subunit and ribosome. Functionally, forms part of the polypeptide exit tunnel. This chain is Large ribosomal subunit protein uL4, found in Burkholderia lata (strain ATCC 17760 / DSM 23089 / LMG 22485 / NCIMB 9086 / R18194 / 383).